Here is a 107-residue protein sequence, read N- to C-terminus: Phosphoribosyl-ATP pyrophosphatase (107 aa).

It belongs to the PRA-PH family.

The protein resides in the cytoplasm. The enzyme catalyses 1-(5-phospho-beta-D-ribosyl)-ATP + H2O = 1-(5-phospho-beta-D-ribosyl)-5'-AMP + diphosphate + H(+). It functions in the pathway amino-acid biosynthesis; L-histidine biosynthesis; L-histidine from 5-phospho-alpha-D-ribose 1-diphosphate: step 2/9. The sequence is that of Phosphoribosyl-ATP pyrophosphatase from Rhizobium etli (strain CIAT 652).